A 286-amino-acid polypeptide reads, in one-letter code: Thiazole synthase (286 aa).

The active-site Schiff-base intermediate with DXP is the Lys-122. Residues Gly-183, Ala-209–Gly-210, and Asn-231–Thr-232 contribute to the 1-deoxy-D-xylulose 5-phosphate site.

Belongs to the ThiG family. Homotetramer. Forms heterodimers with either ThiH or ThiS.

The protein resides in the cytoplasm. It catalyses the reaction [ThiS sulfur-carrier protein]-C-terminal-Gly-aminoethanethioate + 2-iminoacetate + 1-deoxy-D-xylulose 5-phosphate = [ThiS sulfur-carrier protein]-C-terminal Gly-Gly + 2-[(2R,5Z)-2-carboxy-4-methylthiazol-5(2H)-ylidene]ethyl phosphate + 2 H2O + H(+). It functions in the pathway cofactor biosynthesis; thiamine diphosphate biosynthesis. Catalyzes the rearrangement of 1-deoxy-D-xylulose 5-phosphate (DXP) to produce the thiazole phosphate moiety of thiamine. Sulfur is provided by the thiocarboxylate moiety of the carrier protein ThiS. In vitro, sulfur can be provided by H(2)S. This is Thiazole synthase from Synechococcus elongatus (strain ATCC 33912 / PCC 7942 / FACHB-805) (Anacystis nidulans R2).